We begin with the raw amino-acid sequence, 264 residues long: Phycocyanobilin:ferredoxin oxidoreductase (264 aa).

This sequence belongs to the HY2 family.

It carries out the reaction (2R,3Z)-phycocyanobilin + 4 oxidized [2Fe-2S]-[ferredoxin] = biliverdin IXalpha + 4 reduced [2Fe-2S]-[ferredoxin] + 4 H(+). In terms of biological role, catalyzes the four-electron reduction of biliverdin IX-alpha (2-electron reduction at both the A and D rings); the reaction proceeds via an isolatable 2-electron intermediate, 181,182-dihydrobiliverdin. This is Phycocyanobilin:ferredoxin oxidoreductase (pcyA) from Prochlorococcus marinus (strain MIT 9313).